A 147-amino-acid chain; its full sequence is MLGEFKKFAMRGNVVDMAVGIVIGAAFGSIVKSLVDDVLMPPIGLLLGGVDFSDFFVVLKEGVKAAAPYQTLAEAKAAGAVTLNFGLFVNAIISFTIVAFALFMIVKAMNKLRADEEVKPVTTKKCPHCCSEIALEATRCPHCTSEL.

The next 2 helical transmembrane spans lie at 14–34 (VVDM…VKSL) and 85–105 (FGLF…LFMI).

The protein belongs to the MscL family. As to quaternary structure, homopentamer.

The protein resides in the cell inner membrane. Its function is as follows. Channel that opens in response to stretch forces in the membrane lipid bilayer. May participate in the regulation of osmotic pressure changes within the cell. The chain is Large-conductance mechanosensitive channel from Tolumonas auensis (strain DSM 9187 / NBRC 110442 / TA 4).